We begin with the raw amino-acid sequence, 641 residues long: MSATPSRTPHLDRVTGPADLKAMSIADLTALASEVRREIVEVVSQTGGHLGSSLGVVELTVALHAVFNSPGDKLIWDVGHQCYPHKILTGRRSRMLTLRQAGGISGFPKRSESPHDAFGAGHSSTSISAALGFAVGRELGQPVGDTIAIIGDGSITAGMAYEALNHAGHLKSRMFVILNDNDMSIAPPVGALQHYLNTIARQAPFAALKAAAEGIEMHLPGPVRDGARRARQMVTAMPGGATLFEELGFDYIGPVDGHDMAELVETLRVTRARASGPVLIHVCTTKGKGYAPAEGAEDKLHGVSKFDIETGKQKKSIPNAPNYTAVFGERLTEEAARDQAIVAVTAAMPTGTGLDIMQKRFPRRVFDVGIAEQHAVTFAAGMAAAGLKPFLALYSSFVQRGYDQLVHDVALQNLPVRLMIDRAGLVGQDGATHAGAFDVSMLANLPNFTVMAAADEAELCHMVVTAAAHDSGPIALRYPRGEGRGVEMPERGEVLEIGKGRVMTEGTEVAILSFGAHLAQALKAAEMLEAEGVSTTVADARFCRPLDTDLIDRLIEGHAALITLEQGAMGGFGAMVLHYLARTGQLEKGRAIRTMTLPDCYIDHGSPEEMYAWAGLTANDIRDTALAAARPSKSVRIVHSA.

Thiamine diphosphate-binding positions include histidine 80 and 121 to 123; that span reads GHS. Aspartate 152 lines the Mg(2+) pocket. Thiamine diphosphate-binding positions include 153–154, asparagine 181, tyrosine 290, and glutamate 372; that span reads GS. A Mg(2+)-binding site is contributed by asparagine 181.

It belongs to the transketolase family. DXPS subfamily. Homodimer. Mg(2+) serves as cofactor. Requires thiamine diphosphate as cofactor.

It carries out the reaction D-glyceraldehyde 3-phosphate + pyruvate + H(+) = 1-deoxy-D-xylulose 5-phosphate + CO2. It participates in metabolic intermediate biosynthesis; 1-deoxy-D-xylulose 5-phosphate biosynthesis; 1-deoxy-D-xylulose 5-phosphate from D-glyceraldehyde 3-phosphate and pyruvate: step 1/1. Functionally, catalyzes the acyloin condensation reaction between C atoms 2 and 3 of pyruvate and glyceraldehyde 3-phosphate to yield 1-deoxy-D-xylulose-5-phosphate (DXP). The chain is 1-deoxy-D-xylulose-5-phosphate synthase from Rhodobacter capsulatus (Rhodopseudomonas capsulata).